The primary structure comprises 329 residues: Probable carboxylesterase 13 (329 aa).

M1 is subject to N-acetylmethionine. Residues 81-83 carry the Involved in the stabilization of the negatively charged intermediate by the formation of the oxyanion hole motif; that stretch reads HGG. Catalysis depends on residues S165, D269, and H302.

The protein belongs to the 'GDXG' lipolytic enzyme family. As to expression, expressed in flowers.

It catalyses the reaction a carboxylic ester + H2O = an alcohol + a carboxylate + H(+). In terms of biological role, carboxylesterase acting on esters with varying acyl chain length. This Arabidopsis thaliana (Mouse-ear cress) protein is Probable carboxylesterase 13 (CXE13).